Reading from the N-terminus, the 430-residue chain is Aspartate aminotransferase, mitochondrial (430 aa).

A mitochondrion-targeting transit peptide spans 1 to 29 (MALLHSGRVLSGIAAAFHPGLAAAASARA). At Thr48 the chain carries Phosphothreonine. Lys59 is modified (N6-acetyllysine). Substrate is bound at residue Gly65. The residue at position 73 (Lys73) is an N6-acetyllysine; alternate. Lys73 is subject to N6-succinyllysine; alternate. Position 82 is an N6-acetyllysine (Lys82). N6-acetyllysine; alternate is present on Lys90. Position 90 is an N6-succinyllysine; alternate (Lys90). Tyr96 carries the post-translational modification 3'-nitrotyrosine; alternate. Tyr96 carries the phosphotyrosine; alternate modification. N6-acetyllysine; alternate occurs at positions 107 and 122. An N6-succinyllysine; alternate mark is found at Lys107 and Lys122. Ser143 is modified (phosphoserine). An N6-acetyllysine; alternate modification is found at Lys159. Lys159 is modified (N6-succinyllysine; alternate). Trp162 is a substrate binding site. Position 185 is an N6-acetyllysine; alternate (Lys185). Lys185 is subject to N6-succinyllysine; alternate. Position 215 (Asn215) interacts with substrate. Position 227 is an N6-succinyllysine (Lys227). At Lys234 the chain carries N6-acetyllysine. An N6-acetyllysine; alternate mark is found at Lys279 and Lys296. Lys279 is modified (N6-(pyridoxal phosphate)lysine; alternate). The residue at position 296 (Lys296) is an N6-succinyllysine; alternate. Residue Lys302 is modified to N6-acetyllysine. Lys309 carries the N6-acetyllysine; alternate modification. The residue at position 309 (Lys309) is an N6-succinyllysine; alternate. Arg313 is modified (asymmetric dimethylarginine). Thr333 bears the Phosphothreonine mark. Lys338 is subject to N6-acetyllysine; alternate. Lys338 is subject to N6-succinyllysine; alternate. N6-acetyllysine is present on Lys345. Residue Lys363 is modified to N6-acetyllysine; alternate. Lys363 bears the N6-succinyllysine; alternate mark. Residues Lys364 and Lys387 each carry the N6-acetyllysine modification. 2 positions are modified to N6-acetyllysine; alternate: Lys396 and Lys404. N6-succinyllysine; alternate occurs at positions 396 and 404. Arg407 is a substrate binding site.

This sequence belongs to the class-I pyridoxal-phosphate-dependent aminotransferase family. In terms of assembly, homodimer. Requires pyridoxal 5'-phosphate as cofactor.

It is found in the mitochondrion matrix. Its subcellular location is the cell membrane. The catalysed reaction is L-aspartate + 2-oxoglutarate = oxaloacetate + L-glutamate. It carries out the reaction L-kynurenine + 2-oxoglutarate = kynurenate + L-glutamate + H2O. Its function is as follows. Catalyzes the irreversible transamination of the L-tryptophan metabolite L-kynurenine to form kynurenic acid (KA). As a member of the malate-aspartate shuttle, it has a key role in the intracellular NAD(H) redox balance. Is important for metabolite exchange between mitochondria and cytosol, and for amino acid metabolism. Facilitates cellular uptake of long-chain free fatty acids. This Macaca fascicularis (Crab-eating macaque) protein is Aspartate aminotransferase, mitochondrial (GOT2).